We begin with the raw amino-acid sequence, 499 residues long: Myocyte-specific enhancer factor 2A (499 aa).

The 55-residue stretch at 3-57 folds into the MADS-box domain; it reads RKKIQITRIMDERNRQVTFTKRKFGLMKKAYELSVLCDCEIALIIFNSSNKLFQY. The residue at position 4 (Lys4) is an N6-acetyllysine. The segment at residues 58 to 86 is a DNA-binding region (mef2-type); that stretch reads ASTDMDKVLLKYTEYNEPHESRTNSDIVE. N6-acetyllysine is present on Lys117. The segment covering 173–185 has biased composition (low complexity); that stretch reads TSTTMLSPPQTTL. A disordered region spans residues 173–269; the sequence is TSTTMLSPPQ…GGGLGMNNRK (97 aa). The span at 210–233 shows a compositional bias: polar residues; it reads TDLTVPNGAGTSPVGNGVWNSRAS. 4 positions are modified to N6-acetyllysine: Lys248, Lys253, Lys269, and Lys281. Residues 265 to 282 are required for interaction with MAPKs; sequence MNNRKPDLRVVIPPSSKG. Residues 288 to 295 form a beta domain region; it reads TEEDELEL. Residues 380–392 show a composition bias toward low complexity; sequence VSGSQLSQGSNLS. The interval 380–499 is disordered; the sequence is VSGSQLSQGS…KRMRMDTWVT (120 aa). At Lys402 the chain carries N6-acetyllysine; alternate. Residue Lys402 forms a Glycyl lysine isopeptide (Lys-Gly) (interchain with G-Cter in SUMO); alternate linkage. Over residues 421-436 the composition is skewed to pro residues; the sequence is QQPPQQPQPPQPPQQP. The segment covering 445–458 has biased composition (low complexity); it reads SPVDSLSSSSSSYD. Basic and acidic residues-rich tracts occupy residues 459–469 and 480–499; these read GSDREDPRSDF and NSED…TWVT.

In terms of assembly, binds DNA as a homo- or heterodimer. Sumoylation on Lys-402 is enhanced by PIAS1 and represses transcriptional activity. Has no effect on nuclear location nor on DNA binding. Sumoylated by SUMO1 and, to a lesser extent by SUMO2 and SUMO3. In terms of processing, acetylation on Lys-402 activates transcriptional activity. Expressed in both embryonic and adult tissues with high expression in heart and skeletal muscle. Also expressed in gut, lung and brain of 15 dpc embryos and adults.

Its subcellular location is the nucleus. In terms of biological role, transcriptional activator which binds specifically to the MEF2 element, 5'-YTA[AT](4)TAR-3', found in numerous muscle-specific genes. Mediates cellular functions in skeletal and cardiac muscle development,. The polypeptide is Myocyte-specific enhancer factor 2A (MEF2A) (Gallus gallus (Chicken)).